Consider the following 179-residue polypeptide: Large ribosomal subunit protein uL5 (179 aa).

It belongs to the universal ribosomal protein uL5 family. As to quaternary structure, part of the 50S ribosomal subunit; part of the 5S rRNA/L5/L18/L25 subcomplex. Contacts the 5S rRNA and the P site tRNA. Forms a bridge to the 30S subunit in the 70S ribosome.

Its function is as follows. This is one of the proteins that bind and probably mediate the attachment of the 5S RNA into the large ribosomal subunit, where it forms part of the central protuberance. In the 70S ribosome it contacts protein S13 of the 30S subunit (bridge B1b), connecting the 2 subunits; this bridge is implicated in subunit movement. Contacts the P site tRNA; the 5S rRNA and some of its associated proteins might help stabilize positioning of ribosome-bound tRNAs. The protein is Large ribosomal subunit protein uL5 of Verminephrobacter eiseniae (strain EF01-2).